The following is a 119-amino-acid chain: Aspartate 1-decarboxylase (119 aa).

Ser-25 (schiff-base intermediate with substrate; via pyruvic acid) is an active-site residue. Ser-25 carries the pyruvic acid (Ser) modification. A substrate-binding site is contributed by Thr-57. Tyr-58 functions as the Proton donor in the catalytic mechanism. 73–75 contributes to the substrate binding site; it reads GAA.

This sequence belongs to the PanD family. As to quaternary structure, heterooctamer of four alpha and four beta subunits. The cofactor is pyruvate. Post-translationally, is synthesized initially as an inactive proenzyme, which is activated by self-cleavage at a specific serine bond to produce a beta-subunit with a hydroxyl group at its C-terminus and an alpha-subunit with a pyruvoyl group at its N-terminus.

It is found in the cytoplasm. The catalysed reaction is L-aspartate + H(+) = beta-alanine + CO2. It functions in the pathway cofactor biosynthesis; (R)-pantothenate biosynthesis; beta-alanine from L-aspartate: step 1/1. Functionally, catalyzes the pyruvoyl-dependent decarboxylation of aspartate to produce beta-alanine. The polypeptide is Aspartate 1-decarboxylase (Ruthia magnifica subsp. Calyptogena magnifica).